Reading from the N-terminus, the 99-residue chain is DASH complex subunit DAD1 (99 aa).

The segment at 69–99 is disordered; the sequence is GMNHQTRENTRDENNKISSSDTEDENNNNKI. The segment covering 73–83 has biased composition (basic and acidic residues); it reads QTRENTRDENN. A compositionally biased stretch (acidic residues) spans 89-99; sequence DTEDENNNNKI.

It belongs to the DASH complex DAD1 family. Component of the DASH complex consisting of ASK1, DAD1, DAD2, DAD3, DAD4, DAM1, DUO1, HSK3, SPC19 and SPC34, with a stoichiometry of one copy of each subunit per complex. Multiple DASH complexes oligomerize to form a ring that encircles spindle microtubules and organizes the rod-like NDC80 complexes of the outer kinetochore. DASH complex oligomerization strengthens microtubule attachments. On cytoplasmic microtubules, DASH complexes appear to form patches instead of rings.

Its subcellular location is the chromosome. It is found in the centromere. The protein localises to the kinetochore. It localises to the cytoplasm. The protein resides in the cytoskeleton. Its subcellular location is the spindle. It is found in the nucleus. Component of the DASH complex that connects microtubules with kinetochores and couples microtubule depolymerisation to chromosome movement; it is involved in retrieving kinetochores to the spindle poles before their re-orientation on the spindle in early mitosis and allows microtubule depolymerization to pull chromosomes apart and resist detachment during anaphase. Kinetochores, consisting of a centromere-associated inner segment and a microtubule-contacting outer segment, play a crucial role in chromosome segregation by mediating the physical connection between centromeric DNA and microtubules. Kinetochores also serve as an input point for the spindle assembly checkpoint, which delays anaphase until all chromosomes have bioriented on the mitotic spindle. This Candida albicans (strain SC5314 / ATCC MYA-2876) (Yeast) protein is DASH complex subunit DAD1.